Consider the following 390-residue polypeptide: 1-deoxy-D-xylulose 5-phosphate reductoisomerase (390 aa).

Threonine 10, glycine 11, serine 12, isoleucine 13, alanine 36, lysine 37, asparagine 38, and asparagine 122 together coordinate NADPH. Lysine 123 lines the 1-deoxy-D-xylulose 5-phosphate pocket. Glutamate 124 provides a ligand contact to NADPH. Aspartate 148 contributes to the Mn(2+) binding site. Residues serine 149, glutamate 150, serine 174, and histidine 197 each coordinate 1-deoxy-D-xylulose 5-phosphate. Glutamate 150 contacts Mn(2+). Glycine 203 contacts NADPH. Residues serine 210, asparagine 215, lysine 216, and glutamate 219 each coordinate 1-deoxy-D-xylulose 5-phosphate. Residue glutamate 219 participates in Mn(2+) binding.

It belongs to the DXR family. Mg(2+) is required as a cofactor. Requires Mn(2+) as cofactor.

The catalysed reaction is 2-C-methyl-D-erythritol 4-phosphate + NADP(+) = 1-deoxy-D-xylulose 5-phosphate + NADPH + H(+). The protein operates within isoprenoid biosynthesis; isopentenyl diphosphate biosynthesis via DXP pathway; isopentenyl diphosphate from 1-deoxy-D-xylulose 5-phosphate: step 1/6. Catalyzes the NADPH-dependent rearrangement and reduction of 1-deoxy-D-xylulose-5-phosphate (DXP) to 2-C-methyl-D-erythritol 4-phosphate (MEP). This chain is 1-deoxy-D-xylulose 5-phosphate reductoisomerase, found in Trichlorobacter lovleyi (strain ATCC BAA-1151 / DSM 17278 / SZ) (Geobacter lovleyi).